The following is a 416-amino-acid chain: Homogentisate 1,2-dioxygenase (416 aa).

His275 (proton acceptor) is an active-site residue. Residues His318 and Glu324 each contribute to the Fe cation site. Homogentisate contacts are provided by Tyr333 and His354. Residue His354 coordinates Fe cation.

Belongs to the homogentisate dioxygenase family. As to quaternary structure, hexamer; dimer of trimers. Requires Fe cation as cofactor.

It catalyses the reaction homogentisate + O2 = 4-maleylacetoacetate + H(+). The protein operates within amino-acid degradation; L-phenylalanine degradation; acetoacetate and fumarate from L-phenylalanine: step 4/6. In terms of biological role, involved in the catabolism of homogentisate (2,5-dihydroxyphenylacetate or 2,5-OH-PhAc), a central intermediate in the degradation of phenylalanine and tyrosine. Catalyzes the oxidative ring cleavage of the aromatic ring of homogentisate to yield maleylacetoacetate. In Legionella pneumophila (strain Corby), this protein is Homogentisate 1,2-dioxygenase.